The chain runs to 532 residues: IQ domain-containing protein IQM4 (532 aa).

Disordered regions lie at residues 47–67 (SRTN…TGME) and 85–104 (PMNK…RNSL). The segment covering 56–66 (NPQEKSPKTGM) has biased composition (basic and acidic residues). Over residues 85–94 (PMNKEDEEIV) the composition is skewed to acidic residues. An IQ domain is found at 136–165 (LDAAATTLQKVYKSYRTRRNLADCAVVVEE). Disordered stretches follow at residues 410 to 443 (SSGY…KERE) and 487 to 513 (PRIS…PRVR). Polar residues predominate over residues 487 to 496 (PRISPGSTRF). The segment covering 499 to 509 (PYGPIPSPRPS) has biased composition (pro residues).

Expressed in roots, cauline leaves and flowers, and at lower levels in rosette leaves, stems and siliques.

Its subcellular location is the cytoplasm. The protein localises to the nucleus. In terms of biological role, may be involved in biotic and abiotic stress responses. This chain is IQ domain-containing protein IQM4, found in Arabidopsis thaliana (Mouse-ear cress).